Reading from the N-terminus, the 41-residue chain is MQDLLKYLSTAPVLATVWMIITAGILIEFNRFFPDLLFHPM.

A helical transmembrane segment spans residues 7-27 (YLSTAPVLATVWMIITAGILI).

It belongs to the PsaJ family.

The protein resides in the cellular thylakoid membrane. Functionally, may help in the organization of the PsaE and PsaF subunits. In Trichodesmium erythraeum (strain IMS101), this protein is Photosystem I reaction center subunit IX.